A 220-amino-acid chain; its full sequence is tRNA (guanine-N(7)-)-methyltransferase (220 aa).

The S-adenosyl-L-methionine site is built by Glu-44, Glu-69, Asn-96, and Asp-118. Residue Asp-118 is part of the active site. Residue Lys-122 coordinates substrate. Residues 124-129 (RHEKRR) are interaction with RNA. Substrate is bound by residues Asp-154 and 191–194 (TEYE).

The protein belongs to the class I-like SAM-binding methyltransferase superfamily. TrmB family.

It carries out the reaction guanosine(46) in tRNA + S-adenosyl-L-methionine = N(7)-methylguanosine(46) in tRNA + S-adenosyl-L-homocysteine. It functions in the pathway tRNA modification; N(7)-methylguanine-tRNA biosynthesis. In terms of biological role, catalyzes the formation of N(7)-methylguanine at position 46 (m7G46) in tRNA. This chain is tRNA (guanine-N(7)-)-methyltransferase, found in Geobacillus sp. (strain WCH70).